The sequence spans 449 residues: Protein CapK (449 aa).

It participates in capsule biogenesis; capsule polysaccharide biosynthesis. Required for the biosynthesis of type 1 capsular polysaccharide. This Staphylococcus aureus protein is Protein CapK (capK).